The following is a 612-amino-acid chain: Sulfite reductase [NADPH] flavoprotein alpha-component (612 aa).

The 139-residue stretch at 64–202 (VTLISASQTG…QAQQWRQQVV (139 aa)) folds into the Flavodoxin-like domain. Residues 70-75 (SQTGNA), 117-120 (STQG), and 153-162 (LGDTSYEHFC) contribute to the FMN site. Residues 247-461 (TAPLTAQLSV…IEHNDNFRLP (215 aa)) enclose the FAD-binding FR-type domain. FAD is bound by residues Thr-335, Lys-369, 399 to 402 (RLYS), 417 to 419 (TVG), Tyr-423, and 432 to 435 (GGAS). NADP(+) contacts are provided by residues 532 to 533 (SR), 538 to 542 (KIYVQ), and Asp-574. Tyr-612 is a binding site for FAD.

Belongs to the NADPH-dependent sulphite reductase flavoprotein subunit CysJ family. It in the N-terminal section; belongs to the flavodoxin family. The protein in the C-terminal section; belongs to the flavoprotein pyridine nucleotide cytochrome reductase family. As to quaternary structure, alpha(8)-beta(8). The alpha component is a flavoprotein, the beta component is a hemoprotein. It depends on FAD as a cofactor. Requires FMN as cofactor.

It carries out the reaction hydrogen sulfide + 3 NADP(+) + 3 H2O = sulfite + 3 NADPH + 4 H(+). It participates in sulfur metabolism; hydrogen sulfide biosynthesis; hydrogen sulfide from sulfite (NADPH route): step 1/1. Its function is as follows. Component of the sulfite reductase complex that catalyzes the 6-electron reduction of sulfite to sulfide. This is one of several activities required for the biosynthesis of L-cysteine from sulfate. The flavoprotein component catalyzes the electron flow from NADPH -&gt; FAD -&gt; FMN to the hemoprotein component. This is Sulfite reductase [NADPH] flavoprotein alpha-component from Yersinia pseudotuberculosis serotype O:1b (strain IP 31758).